A 358-amino-acid chain; its full sequence is Dynein axonemal assembly factor 10 (358 aa).

6 WD repeats span residues 63–105 (EKKH…QPVF), 109–154 (AHAS…APVA), 162–205 (NNVR…VRWE), 207–249 (NVRN…PKKG), 258–298 (TAGA…QRKV), and 320–358 (ISTQPVAGFDWSPDKEGLFACVAFDQAVRVGIVTKLNKV).

In terms of assembly, interacts with PIH1D1; the interaction associates DNAAF10 with the R2TP complex. Interacts with several dynein axonemal assembly factors.

Its subcellular location is the dynein axonemal particle. In terms of biological role, key assembly factor specifically required for the stability of axonemal dynein heavy chains in cytoplasm. This Chlamydomonas reinhardtii (Chlamydomonas smithii) protein is Dynein axonemal assembly factor 10 (dnaaf10).